The primary structure comprises 448 residues: Nicotinate phosphoribosyltransferase pncB1 (448 aa).

The interval 1 to 21 (MGPPPAARRREGEPDNQDPAG) is disordered. H212 carries the post-translational modification Phosphohistidine. Residues 353–372 (RSSYKESPGGRKEALRRSRA) form a disordered region.

This sequence belongs to the NAPRTase family. In terms of processing, transiently phosphorylated on a His residue during the reaction cycle. Phosphorylation strongly increases the affinity for substrates and increases the rate of nicotinate D-ribonucleotide production. Dephosphorylation regenerates the low-affinity form of the enzyme, leading to product release.

The enzyme catalyses nicotinate + 5-phospho-alpha-D-ribose 1-diphosphate + ATP + H2O = nicotinate beta-D-ribonucleotide + ADP + phosphate + diphosphate. The protein operates within cofactor biosynthesis; NAD(+) biosynthesis; nicotinate D-ribonucleotide from nicotinate: step 1/1. Involved in the Preiss-Handler pathway, which is a recycling route that permits the salvage of free nicotinamide (NM) and nicotinic acid (Na) involved in the NAD biosynthesis. Catalyzes the synthesis of beta-nicotinate D-ribonucleotide from nicotinate and 5-phospho-D-ribose 1-phosphate at the expense of ATP. It is not able to use nicotinamide. PncB1 contributes to basal NAD level. The protein is Nicotinate phosphoribosyltransferase pncB1 (pncB1) of Mycobacterium tuberculosis (strain ATCC 25618 / H37Rv).